The sequence spans 245 residues: Uridylate kinase (245 aa).

15–18 contributes to the ATP binding site; that stretch reads KLSG. The involved in allosteric activation by GTP stretch occupies residues 23–28; sequence GDEGFG. Glycine 57 serves as a coordination point for UMP. ATP-binding residues include glycine 58 and arginine 62. UMP is bound by residues aspartate 77 and 138–145; that span reads TGNPFCTT. Residues threonine 165, tyrosine 171, and aspartate 174 each contribute to the ATP site.

It belongs to the UMP kinase family. In terms of assembly, homohexamer.

It is found in the cytoplasm. The enzyme catalyses UMP + ATP = UDP + ADP. The protein operates within pyrimidine metabolism; CTP biosynthesis via de novo pathway; UDP from UMP (UMPK route): step 1/1. With respect to regulation, allosterically activated by GTP. Inhibited by UTP. Catalyzes the reversible phosphorylation of UMP to UDP. The sequence is that of Uridylate kinase from Shewanella sp. (strain W3-18-1).